A 375-amino-acid polypeptide reads, in one-letter code: Kininogen (375 aa).

The first 23 residues, 1 to 23, serve as a signal peptide directing secretion; that stretch reads MKLGVRLCVLVVFSLQLWGPGQG. 2 Cystatin kininogen-type domains span residues 35 to 139 and 156 to 260; these read CDDK…VEAP and VESE…GPLD. An N-linked (GlcNAc) asparagine glycan is attached at asparagine 74. 4 cysteine pairs are disulfide-bonded: cysteine 91/cysteine 102, cysteine 115/cysteine 133, cysteine 211/cysteine 223, and cysteine 234/cysteine 254. N-linked (GlcNAc) asparagine glycosylation is present at asparagine 235. Positions 283–375 are disordered; sequence EVKTTQASTA…LSDLDLLGKK (93 aa).

N-glycosylated, with sialylated biantennary complex-type glycans. In terms of processing, O-glycosylated, sialylated oligosaccharides. Post-translationally, bradykinin is released from kininogen by kallikrein. The N-terminus is blocked. As to expression, expressed in the skin, liver, intestine, spleen, pancreas and kidney.

It is found in the cytoplasm. The protein localises to the vacuole. In terms of biological role, inhibits papain and ficin (cysteine proteinases) but not trypsin (a serine proteinase). The protein is Kininogen (LOC106584303) of Salmo salar (Atlantic salmon).